The sequence spans 136 residues: Peptide deformylase (136 aa).

Residues C85 and H126 each coordinate Fe cation. The active site involves E127. H130 is a binding site for Fe cation.

The protein belongs to the polypeptide deformylase family. The cofactor is Fe(2+).

It carries out the reaction N-terminal N-formyl-L-methionyl-[peptide] + H2O = N-terminal L-methionyl-[peptide] + formate. Its function is as follows. Removes the formyl group from the N-terminal Met of newly synthesized proteins. Requires at least a dipeptide for an efficient rate of reaction. N-terminal L-methionine is a prerequisite for activity but the enzyme has broad specificity at other positions. This chain is Peptide deformylase, found in Clostridium beijerinckii (strain ATCC 51743 / NCIMB 8052) (Clostridium acetobutylicum).